The following is a 380-amino-acid chain: Cytochrome b (380 aa).

Transmembrane regions (helical) follow at residues 34-54 (FGSLLGLFLTMQIITGIILAM), 78-100 (WLMRTMHMNGAAFMFICMYAHMG), 113-133 (TWNIGIIIMIATMATAFMGYV), and 179-199 (FFAFHFVLPFVLIALSGVHLL). His84 and His98 together coordinate heme b. The heme b site is built by His183 and His197. Position 202 (His202) interacts with a ubiquinone. A run of 4 helical transmembrane segments spans residues 225–245 (FSWKDLLGFAXMILIFCTITL), 289–309 (LGGVVALVGSLIIPATMMLTH), 324–344 (VIFWLFCANFIALSWIGAAPV), and 349–369 (ITLGQVFSMLYFLFFLTAPMI).

It belongs to the cytochrome b family. In terms of assembly, the main subunits of complex b-c1 are: cytochrome b, cytochrome c1 and the Rieske protein. Requires heme b as cofactor.

Its subcellular location is the mitochondrion inner membrane. Component of the ubiquinol-cytochrome c reductase complex (complex III or cytochrome b-c1 complex) that is part of the mitochondrial respiratory chain. The b-c1 complex mediates electron transfer from ubiquinol to cytochrome c. Contributes to the generation of a proton gradient across the mitochondrial membrane that is then used for ATP synthesis. In Xenoturbella bocki (Marine worm), this protein is Cytochrome b (mt:Cyt-b).